A 306-amino-acid chain; its full sequence is Ubiquitin-conjugating enzyme E2Q-like protein CG4502 (306 aa).

Residues 18 to 77 (HKSSNNNNNNNNNHNNNINNNNNNDKVDGATGSSPNINNNNNNNNNNNNHDGAAAPSSAG) form a disordered region. 2 stretches are compositionally biased toward low complexity: residues 22-41 (NNNN…NNNN) and 53-77 (NINN…SSAG). The region spanning 138 to 299 (IRTRRLMKEY…VKTHEKYGWV (162 aa)) is the UBC core domain. Cysteine 234 functions as the Glycyl thioester intermediate in the catalytic mechanism.

The protein belongs to the ubiquitin-conjugating enzyme family.

It carries out the reaction S-ubiquitinyl-[E1 ubiquitin-activating enzyme]-L-cysteine + [E2 ubiquitin-conjugating enzyme]-L-cysteine = [E1 ubiquitin-activating enzyme]-L-cysteine + S-ubiquitinyl-[E2 ubiquitin-conjugating enzyme]-L-cysteine.. Its pathway is protein modification; protein ubiquitination. In terms of biological role, catalyzes the covalent attachment of ubiquitin to other proteins. The sequence is that of Ubiquitin-conjugating enzyme E2Q-like protein CG4502 from Drosophila melanogaster (Fruit fly).